Consider the following 473-residue polypeptide: BPI fold-containing family B member 3 (473 aa).

The first 20 residues, 1-20 (MMLGVYTLLLLWGLATPCLG), serve as a signal peptide directing secretion. Asn139 is a glycosylation site (N-linked (GlcNAc...) asparagine). A disulfide bond links Cys161 and Cys196.

The protein belongs to the BPI/LBP/Plunc superfamily. BPI/LBP family.

The protein localises to the secreted. Functionally, may have the capacity to recognize and bind specific classes of odorants. May act as a carrier molecule, transporting odorants across the mucus layer to access receptor sites. May serve as a primary defense mechanism by recognizing and removing potentially harmful odorants or pathogenic microorganisms from the mucosa or clearing excess odorant from mucus to enable new odorant stimuli to be received. The protein is BPI fold-containing family B member 3 of Mus musculus (Mouse).